A 435-amino-acid chain; its full sequence is Transmembrane protease serine 4 (435 aa).

Topologically, residues 1–30 (MESDSGQPLNNRDIVPFRKPRRPQETFKKV) are cytoplasmic. The chain crosses the membrane as a helical; Signal-anchor for type II membrane protein span at residues 31–51 (GIPIIAVLLSLIALVIVALLI). The Extracellular segment spans residues 52–435 (KVILDKYYFI…WIYNVRKSEM (384 aa)). In terms of domain architecture, LDL-receptor class A spans 59–101 (YFICGSPLTFIQRGQLCDGHLDCASGEDEEHCVKDFPEKPGVA). Disulfide bonds link cysteine 62–cysteine 81, cysteine 75–cysteine 90, cysteine 125–cysteine 181, cysteine 138–cysteine 191, cysteine 194–cysteine 308, cysteine 228–cysteine 244, cysteine 354–cysteine 370, and cysteine 381–cysteine 408. In terms of domain architecture, SRCR spans 102-202 (VRLSKDRSTL…DCGKSLKTPR (101 aa)). Asparagine 128 and asparagine 176 each carry an N-linked (GlcNAc...) asparagine glycan. One can recognise a Peptidase S1 domain in the interval 203–432 (VVGGVEAPVD…YLNWIYNVRK (230 aa)). Catalysis depends on charge relay system residues histidine 243 and aspartate 288. Catalysis depends on serine 385, which acts as the Charge relay system.

The protein belongs to the peptidase S1 family. In terms of processing, proteolytically processed; probably by an autocatalytic mechanism.

The protein resides in the cell membrane. It localises to the secreted. Plasma membrane-anchored serine protease that directly induces processing of pro-uPA/PLAU into the active form through proteolytic activity. Seems to be capable of activating ENaC. The sequence is that of Transmembrane protease serine 4 from Mus musculus (Mouse).